Here is an 87-residue protein sequence, read N- to C-terminus: DNA-directed RNA polymerase subunit omega (87 aa).

This sequence belongs to the RNA polymerase subunit omega family. As to quaternary structure, the RNAP catalytic core consists of 2 alpha, 1 beta, 1 beta' and 1 omega subunit. When a sigma factor is associated with the core the holoenzyme is formed, which can initiate transcription.

The enzyme catalyses RNA(n) + a ribonucleoside 5'-triphosphate = RNA(n+1) + diphosphate. Promotes RNA polymerase assembly. Latches the N- and C-terminal regions of the beta' subunit thereby facilitating its interaction with the beta and alpha subunits. The chain is DNA-directed RNA polymerase subunit omega from Pseudomonas savastanoi pv. phaseolicola (strain 1448A / Race 6) (Pseudomonas syringae pv. phaseolicola (strain 1448A / Race 6)).